The chain runs to 240 residues: UDP-2,3-diacylglucosamine hydrolase (240 aa).

Residues D8, H10, D41, N79, and H114 each contribute to the Mn(2+) site. 79-80 (NR) provides a ligand contact to substrate. D122, S160, T164, K167, and H195 together coordinate substrate. The Mn(2+) site is built by H195 and H197.

It belongs to the LpxH family. The cofactor is Mn(2+).

It is found in the cell inner membrane. The enzyme catalyses UDP-2-N,3-O-bis[(3R)-3-hydroxytetradecanoyl]-alpha-D-glucosamine + H2O = 2-N,3-O-bis[(3R)-3-hydroxytetradecanoyl]-alpha-D-glucosaminyl 1-phosphate + UMP + 2 H(+). Its pathway is glycolipid biosynthesis; lipid IV(A) biosynthesis; lipid IV(A) from (3R)-3-hydroxytetradecanoyl-[acyl-carrier-protein] and UDP-N-acetyl-alpha-D-glucosamine: step 4/6. Its function is as follows. Hydrolyzes the pyrophosphate bond of UDP-2,3-diacylglucosamine to yield 2,3-diacylglucosamine 1-phosphate (lipid X) and UMP by catalyzing the attack of water at the alpha-P atom. Involved in the biosynthesis of lipid A, a phosphorylated glycolipid that anchors the lipopolysaccharide to the outer membrane of the cell. The chain is UDP-2,3-diacylglucosamine hydrolase from Pseudomonas aeruginosa (strain UCBPP-PA14).